Here is a 122-residue protein sequence, read N- to C-terminus: Large ribosomal subunit protein uL14 (122 aa).

It belongs to the universal ribosomal protein uL14 family. In terms of assembly, part of the 50S ribosomal subunit. Forms a cluster with proteins L3 and L19. In the 70S ribosome, L14 and L19 interact and together make contacts with the 16S rRNA in bridges B5 and B8.

In terms of biological role, binds to 23S rRNA. Forms part of two intersubunit bridges in the 70S ribosome. This is Large ribosomal subunit protein uL14 from Salinispora tropica (strain ATCC BAA-916 / DSM 44818 / JCM 13857 / NBRC 105044 / CNB-440).